The sequence spans 63 residues: Cecropin-A1 (63 aa).

The first 19 residues, 1–19 (MNFYNIFVFVALILAITIG), serve as a signal peptide directing secretion. At R62 the chain carries Arginine amide.

Belongs to the cecropin family.

It localises to the secreted. Cecropins have lytic and antibacterial activity against several Gram-positive and Gram-negative bacteria. The sequence is that of Cecropin-A1 (CecA1) from Drosophila simulans (Fruit fly).